A 632-amino-acid polypeptide reads, in one-letter code: Acyl-coenzyme A oxidase-like protein (632 aa).

376-381 (TGGMGY) is a binding site for FAD.

This sequence belongs to the acyl-CoA oxidase family. The cofactor is FAD.

The polypeptide is Acyl-coenzyme A oxidase-like protein (Acoxl) (Mus musculus (Mouse)).